We begin with the raw amino-acid sequence, 119 residues long: Large ribosomal subunit protein uL18 (119 aa).

It belongs to the universal ribosomal protein uL18 family. As to quaternary structure, part of the 50S ribosomal subunit; part of the 5S rRNA/L5/L18/L25 subcomplex. Contacts the 5S and 23S rRNAs.

Functionally, this is one of the proteins that bind and probably mediate the attachment of the 5S RNA into the large ribosomal subunit, where it forms part of the central protuberance. This chain is Large ribosomal subunit protein uL18, found in Ruegeria pomeroyi (strain ATCC 700808 / DSM 15171 / DSS-3) (Silicibacter pomeroyi).